The sequence spans 93 residues: Small ribosomal subunit protein uS17 (93 aa).

This sequence belongs to the universal ribosomal protein uS17 family. In terms of assembly, part of the 30S ribosomal subunit.

One of the primary rRNA binding proteins, it binds specifically to the 5'-end of 16S ribosomal RNA. This Rhodococcus erythropolis (strain PR4 / NBRC 100887) protein is Small ribosomal subunit protein uS17.